Reading from the N-terminus, the 428-residue chain is Putative zinc metalloprotease LL2128 (428 aa).

Position 19 (His19) interacts with Zn(2+). Residue Glu20 is part of the active site. Residue His23 coordinates Zn(2+). 3 consecutive transmembrane segments (helical) span residues Gly188 to Val210, Ile354 to Leu376, and Ile401 to Leu423. A PDZ domain is found at Gly188 to Lys282.

This sequence belongs to the peptidase M50B family. It depends on Zn(2+) as a cofactor.

It is found in the cell membrane. The sequence is that of Putative zinc metalloprotease LL2128 from Lactococcus lactis subsp. lactis (strain IL1403) (Streptococcus lactis).